The primary structure comprises 382 residues: Lipid-A-disaccharide synthase (382 aa).

It belongs to the LpxB family.

The catalysed reaction is 2-N,3-O-bis[(3R)-3-hydroxytetradecanoyl]-alpha-D-glucosaminyl 1-phosphate + UDP-2-N,3-O-bis[(3R)-3-hydroxytetradecanoyl]-alpha-D-glucosamine = lipid A disaccharide (E. coli) + UDP + H(+). The enzyme catalyses a lipid X + a UDP-2-N,3-O-bis[(3R)-3-hydroxyacyl]-alpha-D-glucosamine = a lipid A disaccharide + UDP + H(+). It participates in glycolipid biosynthesis; lipid IV(A) biosynthesis; lipid IV(A) from (3R)-3-hydroxytetradecanoyl-[acyl-carrier-protein] and UDP-N-acetyl-alpha-D-glucosamine: step 5/6. Functionally, condensation of UDP-2,3-diacylglucosamine and 2,3-diacylglucosamine-1-phosphate to form lipid A disaccharide, a precursor of lipid A, a phosphorylated glycolipid that anchors the lipopolysaccharide to the outer membrane of the cell. The chain is Lipid-A-disaccharide synthase from Shigella flexneri serotype 5b (strain 8401).